Reading from the N-terminus, the 330-residue chain is MKKTVLSGVQTTGALHLGNYLGSIRNWIKMQEEYNCFFFLADLHAITIDIKTSELNDAIMEVLAIYLAAGLNPDKVTIFAQSMVKEHVELSWLLNCVTPLGWLKRMTQFKDKAGSAQCKACLGLFAYPILMAADILIYKADIVPVGEDQKQHLELTRDIAEVINRRFDKEILKVPDILISETGTRIMSLRNGLKKMSKSDISDFSRINLKDSNDLIHQKIKKAKTDHLSFISYNKKTRPEISNLLDIYKSFSKESIEKIIDNYQNQGFAKFKEDLAEIIITNLQPIRNKCLELMNDKEYLLKILHKGAQKARIRASETVNEVKKQFGFII.

ATP is bound by residues 10–12 and 18–19; these read QTT and GN. A 'HIGH' region motif is present at residues 11 to 19; the sequence is TTGALHLGN. L-tryptophan is bound at residue Asp-134. ATP contacts are provided by residues 146–148, Ile-186, and 195–199; these read GED and KMSKS. The 'KMSKS' region signature appears at 195–199; the sequence is KMSKS.

The protein belongs to the class-I aminoacyl-tRNA synthetase family. As to quaternary structure, homodimer.

It localises to the cytoplasm. The enzyme catalyses tRNA(Trp) + L-tryptophan + ATP = L-tryptophyl-tRNA(Trp) + AMP + diphosphate + H(+). Its function is as follows. Catalyzes the attachment of tryptophan to tRNA(Trp). This is Tryptophan--tRNA ligase from Rickettsia prowazekii (strain Madrid E).